Reading from the N-terminus, the 211-residue chain is Protein-L-isoaspartate O-methyltransferase (211 aa).

Residue S62 is part of the active site.

The protein belongs to the methyltransferase superfamily. L-isoaspartyl/D-aspartyl protein methyltransferase family.

Its subcellular location is the cytoplasm. The catalysed reaction is [protein]-L-isoaspartate + S-adenosyl-L-methionine = [protein]-L-isoaspartate alpha-methyl ester + S-adenosyl-L-homocysteine. In terms of biological role, catalyzes the methyl esterification of L-isoaspartyl residues in peptides and proteins that result from spontaneous decomposition of normal L-aspartyl and L-asparaginyl residues. It plays a role in the repair and/or degradation of damaged proteins. The protein is Protein-L-isoaspartate O-methyltransferase of Shewanella pealeana (strain ATCC 700345 / ANG-SQ1).